Here is a 256-residue protein sequence, read N- to C-terminus: Nuclear shuttle protein (256 aa).

The short motif at 18–39 is the Bipartite nuclear localization signal element; that stretch reads NTTNRFPIRRKYVGGHTRPSVR. The Nuclear localization signal signature appears at 81–96; it reads SRGPSGDGRSRDYIKL. The interval 150 to 187 is interaction with Arabidopsis thaliana NSI protein; that stretch reads ELFGAYSACYVNLRLLNNQQHRYRVLHSVKRFVSSAGD.

The protein belongs to the begomovirus nuclear shuttle protein family. As to quaternary structure, binds to single-stranded and double-stranded viral DNA. Interacts with the host nuclear shuttle interacting (NSI) protein. This interaction may allow NSP to recruit NSI monomers to the viral genome and thus regulate nuclear export of viral genome by NSP.

Its subcellular location is the host nucleus. It localises to the host cytoplasm. The protein resides in the host cell membrane. Its function is as follows. Binds to the genomic viral ssDNA, shuttles it into and out of the cell nucleus. Begomoviruses use 2 proteins to transport their DNA from cell to cell. The nuclear shuttle protein (NSP) shuttles it between nucleus and cytoplasm and the movement protein (MP) probably transports the DNA-NSP complex to the cell periphery and facilitates movement across the cell wall. This Hewittia sublobata (Coralbush) protein is Nuclear shuttle protein.